The chain runs to 511 residues: MKKADILVLDFGSQYTQLIARRLREQGVYAEILPFNVSLTDIKAKEPKGIILSGGPASVYATDAYFCDKGIFDLNLPILGICYGMQLMAHHYKATVAPAGHKEYGKANIEIKKDNALFKNLPKKQTVWMSHSDKVENLPQGFEVLATSENSPFCVFGNEDKKFFALQFHPEVQHSEFGKNILKNFAKYACNCESVWNMGSFAKTQAEKIREEVGNDKVLCAVSGGVDSSVVAALLASAIKEQVIVVFVDNGLLRSREKEQVEFMFKNTLGIDLISIDASEIFLSRLANVTDPEQKRKIIGNTFIEVFEEEAKKHKDVKYLAQGTLYTDIIESSVVGASKTIKSHHNVGGLPEKMNLKLIEPLKEIFKDEVRALGLELGLSKEVVYRHPFPGPGLAIRIMGEVNRPGLELLRKADVILLEELKSTGWYDKTWQAFCVLLNVKSVGVMGDNRTYDNAVCIRVVDASDGMTATFSHLPYEVLENISRRIINEVEGINRVVYDISSKPPATIEWE.

In terms of domain architecture, Glutamine amidotransferase type-1 spans 5-195 (DILVLDFGSQ…AKYACNCESV (191 aa)). Residue C82 is the Nucleophile of the active site. Active-site residues include H169 and E171. A GMPS ATP-PPase domain is found at 196-386 (WNMGSFAKTQ…LGLSKEVVYR (191 aa)). Residue 223–229 (SGGVDSS) coordinates ATP.

As to quaternary structure, homodimer.

It catalyses the reaction XMP + L-glutamine + ATP + H2O = GMP + L-glutamate + AMP + diphosphate + 2 H(+). It participates in purine metabolism; GMP biosynthesis; GMP from XMP (L-Gln route): step 1/1. Catalyzes the synthesis of GMP from XMP. The chain is GMP synthase [glutamine-hydrolyzing] from Campylobacter jejuni (strain RM1221).